A 227-amino-acid chain; its full sequence is Cytochrome c oxidase subunit 2 (227 aa).

Over 1-14 the chain is Mitochondrial intermembrane; the sequence is MAYPMQLGFQDATS. Residues 15 to 45 form a helical membrane-spanning segment; that stretch reads PIMEELLHFHDHTLMIVFLISSLVLYIISLM. Topologically, residues 46–59 are mitochondrial matrix; the sequence is LTTKLTHTSTMDAQ. A helical transmembrane segment spans residues 60–87; the sequence is EVETIWTILPAIILILIALPSLRILYMM. Topologically, residues 88–227 are mitochondrial intermembrane; the sequence is DEINNPSLTV…YFEKWSASML (140 aa). Cu cation contacts are provided by histidine 161, cysteine 196, glutamate 198, cysteine 200, histidine 204, and methionine 207. A Mg(2+)-binding site is contributed by glutamate 198. Position 218 is a phosphotyrosine (tyrosine 218).

It belongs to the cytochrome c oxidase subunit 2 family. In terms of assembly, component of the cytochrome c oxidase (complex IV, CIV), a multisubunit enzyme composed of 14 subunits. The complex is composed of a catalytic core of 3 subunits MT-CO1, MT-CO2 and MT-CO3, encoded in the mitochondrial DNA, and 11 supernumerary subunits COX4I, COX5A, COX5B, COX6A, COX6B, COX6C, COX7A, COX7B, COX7C, COX8 and NDUFA4, which are encoded in the nuclear genome. The complex exists as a monomer or a dimer and forms supercomplexes (SCs) in the inner mitochondrial membrane with NADH-ubiquinone oxidoreductase (complex I, CI) and ubiquinol-cytochrome c oxidoreductase (cytochrome b-c1 complex, complex III, CIII), resulting in different assemblies (supercomplex SCI(1)III(2)IV(1) and megacomplex MCI(2)III(2)IV(2)). Found in a complex with TMEM177, COA6, COX18, COX20, SCO1 and SCO2. Interacts with TMEM177 in a COX20-dependent manner. Interacts with COX20. Interacts with COX16. The cofactor is Cu cation.

It is found in the mitochondrion inner membrane. It carries out the reaction 4 Fe(II)-[cytochrome c] + O2 + 8 H(+)(in) = 4 Fe(III)-[cytochrome c] + 2 H2O + 4 H(+)(out). Functionally, component of the cytochrome c oxidase, the last enzyme in the mitochondrial electron transport chain which drives oxidative phosphorylation. The respiratory chain contains 3 multisubunit complexes succinate dehydrogenase (complex II, CII), ubiquinol-cytochrome c oxidoreductase (cytochrome b-c1 complex, complex III, CIII) and cytochrome c oxidase (complex IV, CIV), that cooperate to transfer electrons derived from NADH and succinate to molecular oxygen, creating an electrochemical gradient over the inner membrane that drives transmembrane transport and the ATP synthase. Cytochrome c oxidase is the component of the respiratory chain that catalyzes the reduction of oxygen to water. Electrons originating from reduced cytochrome c in the intermembrane space (IMS) are transferred via the dinuclear copper A center (CU(A)) of subunit 2 and heme A of subunit 1 to the active site in subunit 1, a binuclear center (BNC) formed by heme A3 and copper B (CU(B)). The BNC reduces molecular oxygen to 2 water molecules using 4 electrons from cytochrome c in the IMS and 4 protons from the mitochondrial matrix. The polypeptide is Cytochrome c oxidase subunit 2 (MT-CO2) (Syncerus caffer (African buffalo)).